We begin with the raw amino-acid sequence, 418 residues long: Putative competence-damage inducible protein (418 aa).

The protein belongs to the CinA family.

The polypeptide is Putative competence-damage inducible protein (Streptococcus pneumoniae (strain JJA)).